The following is a 418-amino-acid chain: Ankyrin repeat domain-containing protein 61 (418 aa).

8 ANK repeats span residues 27 to 57 (ALHS…NQPL), 74 to 103 (QPIF…DPEV), 131 to 160 (TRIQ…QVNA), 166 to 195 (NKHS…QVNA), 199 to 228 (SSMT…NVNC), 233 to 272 (TGNT…QVNA), 276 to 305 (EGQT…NVNI), and 309 to 342 (NGES…PLRL).

This is Ankyrin repeat domain-containing protein 61 (Ankrd61) from Rattus norvegicus (Rat).